The chain runs to 1595 residues: Pentafunctional AROM polypeptide (1595 aa).

The 3-dehydroquinate synthase stretch occupies residues 1–384 (MGVPTKISIL…HEPRASTVSN (384 aa)). NAD(+)-binding positions include 44 to 46 (DTN), 81 to 84 (ESSK), 114 to 116 (GGV), and D119. R130 lines the 7-phospho-2-dehydro-3-deoxy-D-arabino-heptonate pocket. 139-140 (TT) serves as a coordination point for NAD(+). Residues D146 and K152 each contribute to the 7-phospho-2-dehydro-3-deoxy-D-arabino-heptonate site. NAD(+) is bound at residue K161. 7-phospho-2-dehydro-3-deoxy-D-arabino-heptonate is bound at residue N162. NAD(+) contacts are provided by residues 179-182 (FLNT) and N190. E194 contributes to the Zn(2+) binding site. Residues 194 to 197 (EVIK) and K250 contribute to the 7-phospho-2-dehydro-3-deoxy-D-arabino-heptonate site. The Proton acceptor; for 3-dehydroquinate synthase activity role is filled by E260. 7-phospho-2-dehydro-3-deoxy-D-arabino-heptonate is bound by residues 264-268 (RNLLN) and H271. H271 contacts Zn(2+). The Proton acceptor; for 3-dehydroquinate synthase activity role is filled by H275. 7-phospho-2-dehydro-3-deoxy-D-arabino-heptonate is bound by residues H287 and K356. H287 is a Zn(2+) binding site. Residues 397–842 (VSPGVPKGLD…WDSLAQTFKV (446 aa)) form an EPSP synthase region. C824 acts as the For EPSP synthase activity in catalysis. A shikimate kinase region spans residues 866 to 1057 (ASIFIIGMRG…RRKENTFFVS (192 aa)). ATP is bound at residue 872-879 (GMRGAGKT). Positions 1058–1278 (LTLPDLSLAA…AAPGQLSARE (221 aa)) are 3-dehydroquinase. H1181 (proton acceptor; for 3-dehydroquinate dehydratase activity) is an active-site residue. The active-site Schiff-base intermediate with substrate; for 3-dehydroquinate dehydratase activity is K1209. A shikimate dehydrogenase region spans residues 1291-1595 (AKKFAVIGNP…MGVSPSEDIL (305 aa)).

The protein in the N-terminal section; belongs to the sugar phosphate cyclases superfamily. Dehydroquinate synthase family. In the 2nd section; belongs to the EPSP synthase family. It in the 3rd section; belongs to the shikimate kinase family. This sequence in the 4th section; belongs to the type-I 3-dehydroquinase family. The protein in the C-terminal section; belongs to the shikimate dehydrogenase family. Homodimer. Requires Zn(2+) as cofactor.

The protein resides in the cytoplasm. It catalyses the reaction 7-phospho-2-dehydro-3-deoxy-D-arabino-heptonate = 3-dehydroquinate + phosphate. The catalysed reaction is 3-dehydroquinate = 3-dehydroshikimate + H2O. It carries out the reaction shikimate + NADP(+) = 3-dehydroshikimate + NADPH + H(+). The enzyme catalyses shikimate + ATP = 3-phosphoshikimate + ADP + H(+). It catalyses the reaction 3-phosphoshikimate + phosphoenolpyruvate = 5-O-(1-carboxyvinyl)-3-phosphoshikimate + phosphate. Its pathway is metabolic intermediate biosynthesis; chorismate biosynthesis; chorismate from D-erythrose 4-phosphate and phosphoenolpyruvate: step 2/7. The protein operates within metabolic intermediate biosynthesis; chorismate biosynthesis; chorismate from D-erythrose 4-phosphate and phosphoenolpyruvate: step 3/7. It functions in the pathway metabolic intermediate biosynthesis; chorismate biosynthesis; chorismate from D-erythrose 4-phosphate and phosphoenolpyruvate: step 4/7. It participates in metabolic intermediate biosynthesis; chorismate biosynthesis; chorismate from D-erythrose 4-phosphate and phosphoenolpyruvate: step 5/7. Its pathway is metabolic intermediate biosynthesis; chorismate biosynthesis; chorismate from D-erythrose 4-phosphate and phosphoenolpyruvate: step 6/7. Its function is as follows. The AROM polypeptide catalyzes 5 consecutive enzymatic reactions in prechorismate polyaromatic amino acid biosynthesis. The chain is Pentafunctional AROM polypeptide from Ajellomyces capsulatus (strain G186AR / H82 / ATCC MYA-2454 / RMSCC 2432) (Darling's disease fungus).